The primary structure comprises 90 residues: MEVKTFAFLQIAVLIAFSLHSASAGSKQPGAAGSSSDSVEAVFCPTNCTKGTNGAWSGCSDDCICVHVGENTEGSCMKFSGDYDYPTPEA.

A signal peptide spans 1-24; the sequence is MEVKTFAFLQIAVLIAFSLHSASA. 3 disulfides stabilise this stretch: Cys44/Cys63, Cys48/Cys65, and Cys59/Cys76. An N-linked (GlcNAc...) asparagine glycan is attached at Asn47.

It is found in the secreted. Salivary chemokine-binding protein which binds to host chemokines CXCL1, CXCL2, CXCL3, CXCL5, CXCL6 and CXCL13. The polypeptide is Evasin P458 (Ixodes ricinus (Common tick)).